The chain runs to 310 residues: tRNA-cytidine(32) 2-sulfurtransferase (310 aa).

The short motif at 45-50 (SGGKDS) is the PP-loop motif element. Positions 120, 123, and 211 each coordinate [4Fe-4S] cluster.

The protein belongs to the TtcA family. As to quaternary structure, homodimer. Mg(2+) serves as cofactor. The cofactor is [4Fe-4S] cluster.

Its subcellular location is the cytoplasm. It carries out the reaction cytidine(32) in tRNA + S-sulfanyl-L-cysteinyl-[cysteine desulfurase] + AH2 + ATP = 2-thiocytidine(32) in tRNA + L-cysteinyl-[cysteine desulfurase] + A + AMP + diphosphate + H(+). It participates in tRNA modification. Functionally, catalyzes the ATP-dependent 2-thiolation of cytidine in position 32 of tRNA, to form 2-thiocytidine (s(2)C32). The sulfur atoms are provided by the cysteine/cysteine desulfurase (IscS) system. This chain is tRNA-cytidine(32) 2-sulfurtransferase, found in Shewanella baltica (strain OS155 / ATCC BAA-1091).